Here is a 161-residue protein sequence, read N- to C-terminus: MSFMNSFKKLVGVEDDYDEYYDDQYYYDESDHVESESKDYEQKQNYETKSNIVSMNNSATKPVESKPLNRVKINIHEPISFDDAPKVIDVILKNEVAVLNIEMLEKDVKQRIFDFVSGAIYSLDGKMQKVTKDIFVLVPKGVEIDGKIKDQITKNNGFFQL.

It belongs to the SepF family. In terms of assembly, homodimer. Interacts with FtsZ.

It is found in the cytoplasm. Functionally, cell division protein that is part of the divisome complex and is recruited early to the Z-ring. Probably stimulates Z-ring formation, perhaps through the cross-linking of FtsZ protofilaments. Its function overlaps with FtsA. In Finegoldia magna (strain ATCC 29328 / DSM 20472 / WAL 2508) (Peptostreptococcus magnus), this protein is Cell division protein SepF.